Consider the following 1003-residue polypeptide: Alpha-1,4 glucan phosphorylase L isozyme, chloroplastic/amyloplastic (1003 aa).

Residues 1–64 (MASMTMRFHP…RRRSAFSVKC (64 aa)) constitute a chloroplast transit peptide. 2 disordered regions span residues 71–91 (KQKV…SSFA) and 526–593 (SSEE…KKLP). The span at 537–553 (GEEEETSKEGGEEEEEK) shows a compositional bias: acidic residues. Residues 569-580 (EVEKAIAEKDGT) are compositionally biased toward basic and acidic residues. Lys-849 is modified (N6-(pyridoxal phosphate)lysine).

Belongs to the glycogen phosphorylase family. The cofactor is pyridoxal 5'-phosphate. As to expression, found predominantly in cotyledons and early seed coat.

It is found in the plastid. The protein localises to the chloroplast. The protein resides in the amyloplast. The catalysed reaction is [(1-&gt;4)-alpha-D-glucosyl](n) + phosphate = [(1-&gt;4)-alpha-D-glucosyl](n-1) + alpha-D-glucose 1-phosphate. Its function is as follows. Phosphorylase is an important allosteric enzyme in carbohydrate metabolism. Enzymes from different sources differ in their regulatory mechanisms and in their natural substrates. However, all known phosphorylases share catalytic and structural properties. The L isoform exhibits higher affinity for unbranched substrates such as glucan-like amylose and maltodextrin. The protein is Alpha-1,4 glucan phosphorylase L isozyme, chloroplastic/amyloplastic (PHO1) of Vicia faba (Broad bean).